A 436-amino-acid chain; its full sequence is 3-ketoacyl-CoA thiolase (436 aa).

Cysteine 99 (acyl-thioester intermediate) is an active-site residue. Catalysis depends on proton acceptor residues histidine 392 and cysteine 422.

The protein belongs to the thiolase-like superfamily. Thiolase family. In terms of assembly, heterotetramer of two alpha chains (FadJ) and two beta chains (FadI).

The protein resides in the cytoplasm. It carries out the reaction an acyl-CoA + acetyl-CoA = a 3-oxoacyl-CoA + CoA. It participates in lipid metabolism; fatty acid beta-oxidation. Functionally, catalyzes the final step of fatty acid oxidation in which acetyl-CoA is released and the CoA ester of a fatty acid two carbons shorter is formed. The chain is 3-ketoacyl-CoA thiolase from Escherichia coli (strain K12 / MC4100 / BW2952).